The following is a 210-amino-acid chain: Probable GTP-binding protein EngB (210 aa).

Positions 25–199 (CGIEVAFAGR…RQKLDSWFSE (175 aa)) constitute an EngB-type G domain. GTP is bound by residues 33-40 (GRSNAGKS), 60-64 (GRTQL), 78-81 (DLPG), 145-148 (TKAD), and 178-180 (FSS). Residues serine 40 and threonine 62 each contribute to the Mg(2+) site.

This sequence belongs to the TRAFAC class TrmE-Era-EngA-EngB-Septin-like GTPase superfamily. EngB GTPase family. Mg(2+) serves as cofactor.

Its function is as follows. Necessary for normal cell division and for the maintenance of normal septation. In Salmonella agona (strain SL483), this protein is Probable GTP-binding protein EngB.